The sequence spans 209 residues: Ribosomal RNA large subunit methyltransferase E (209 aa).

Residues Gly-63, Trp-65, Asp-83, Asp-99, and Asp-124 each contribute to the S-adenosyl-L-methionine site. Residue Lys-164 is the Proton acceptor of the active site.

Belongs to the class I-like SAM-binding methyltransferase superfamily. RNA methyltransferase RlmE family.

Its subcellular location is the cytoplasm. The catalysed reaction is uridine(2552) in 23S rRNA + S-adenosyl-L-methionine = 2'-O-methyluridine(2552) in 23S rRNA + S-adenosyl-L-homocysteine + H(+). Its function is as follows. Specifically methylates the uridine in position 2552 of 23S rRNA at the 2'-O position of the ribose in the fully assembled 50S ribosomal subunit. This Photobacterium profundum (strain SS9) protein is Ribosomal RNA large subunit methyltransferase E.